We begin with the raw amino-acid sequence, 65 residues long: uncharacterized protein (65 aa).

The N-terminal stretch at 1–16 (MMHVCSLLVSFDVVKS) is a signal peptide.

This is an uncharacterized protein from Saccharomyces cerevisiae (strain ATCC 204508 / S288c) (Baker's yeast).